The primary structure comprises 116 residues: UPF0102 protein IL0423 (116 aa).

The protein belongs to the UPF0102 family.

This is UPF0102 protein IL0423 from Idiomarina loihiensis (strain ATCC BAA-735 / DSM 15497 / L2-TR).